The sequence spans 237 residues: Uracil-DNA glycosylase (237 aa).

The Proton acceptor role is filled by D77.

It belongs to the uracil-DNA glycosylase (UDG) superfamily. UNG family.

Its subcellular location is the cytoplasm. It carries out the reaction Hydrolyzes single-stranded DNA or mismatched double-stranded DNA and polynucleotides, releasing free uracil.. Functionally, excises uracil residues from the DNA which can arise as a result of misincorporation of dUMP residues by DNA polymerase or due to deamination of cytosine. In Acinetobacter baumannii (strain ACICU), this protein is Uracil-DNA glycosylase.